The primary structure comprises 222 residues: 3-demethoxyubiquinol 3-hydroxylase (222 aa).

Fe cation-binding residues include glutamate 71, glutamate 101, histidine 104, glutamate 153, glutamate 185, and histidine 188.

This sequence belongs to the COQ7 family. Fe cation is required as a cofactor.

It is found in the cell membrane. It catalyses the reaction a 5-methoxy-2-methyl-3-(all-trans-polyprenyl)benzene-1,4-diol + AH2 + O2 = a 3-demethylubiquinol + A + H2O. It participates in cofactor biosynthesis; ubiquinone biosynthesis. Its function is as follows. Catalyzes the hydroxylation of 2-nonaprenyl-3-methyl-6-methoxy-1,4-benzoquinol during ubiquinone biosynthesis. This is 3-demethoxyubiquinol 3-hydroxylase from Bordetella bronchiseptica (strain ATCC BAA-588 / NCTC 13252 / RB50) (Alcaligenes bronchisepticus).